The sequence spans 296 residues: Acetylglutamate kinase (296 aa).

Substrate is bound by residues 67 to 68 (GG), arginine 89, and asparagine 194.

This sequence belongs to the acetylglutamate kinase family. ArgB subfamily.

It localises to the cytoplasm. It carries out the reaction N-acetyl-L-glutamate + ATP = N-acetyl-L-glutamyl 5-phosphate + ADP. It participates in amino-acid biosynthesis; L-arginine biosynthesis; N(2)-acetyl-L-ornithine from L-glutamate: step 2/4. Its function is as follows. Catalyzes the ATP-dependent phosphorylation of N-acetyl-L-glutamate. In Brucella abortus (strain S19), this protein is Acetylglutamate kinase.